Consider the following 278-residue polypeptide: Tryptophan synthase alpha chain (278 aa).

Catalysis depends on proton acceptor residues E49 and D60.

Belongs to the TrpA family. Tetramer of two alpha and two beta chains.

It carries out the reaction (1S,2R)-1-C-(indol-3-yl)glycerol 3-phosphate + L-serine = D-glyceraldehyde 3-phosphate + L-tryptophan + H2O. The protein operates within amino-acid biosynthesis; L-tryptophan biosynthesis; L-tryptophan from chorismate: step 5/5. Its function is as follows. The alpha subunit is responsible for the aldol cleavage of indoleglycerol phosphate to indole and glyceraldehyde 3-phosphate. The chain is Tryptophan synthase alpha chain from Rhodopirellula baltica (strain DSM 10527 / NCIMB 13988 / SH1).